Consider the following 405-residue polypeptide: Glucose-1-phosphate adenylyltransferase 1 (405 aa).

Residues Tyr96, Gly161, 176–177 (EK), and Ser194 contribute to the alpha-D-glucose 1-phosphate site.

It belongs to the bacterial/plant glucose-1-phosphate adenylyltransferase family. In terms of assembly, homotetramer.

It catalyses the reaction alpha-D-glucose 1-phosphate + ATP + H(+) = ADP-alpha-D-glucose + diphosphate. The protein operates within glycan biosynthesis; glycogen biosynthesis. Functionally, involved in the biosynthesis of ADP-glucose, a building block required for the elongation reactions to produce glycogen. Catalyzes the reaction between ATP and alpha-D-glucose 1-phosphate (G1P) to produce pyrophosphate and ADP-Glc. The protein is Glucose-1-phosphate adenylyltransferase 1 of Vibrio vulnificus (strain YJ016).